Reading from the N-terminus, the 228-residue chain is Uracil-DNA glycosylase (228 aa).

The active-site Proton acceptor is the Asp64.

Belongs to the uracil-DNA glycosylase (UDG) superfamily. UNG family.

Its subcellular location is the cytoplasm. The catalysed reaction is Hydrolyzes single-stranded DNA or mismatched double-stranded DNA and polynucleotides, releasing free uracil.. Functionally, excises uracil residues from the DNA which can arise as a result of misincorporation of dUMP residues by DNA polymerase or due to deamination of cytosine. The protein is Uracil-DNA glycosylase of Yersinia enterocolitica serotype O:8 / biotype 1B (strain NCTC 13174 / 8081).